The chain runs to 82 residues: M-theraphotoxin-Gr1a (82 aa).

A signal peptide spans 1 to 21 (MKTSVVFVIAGLALLSVVCYA). Positions 22-46 (SELKEQSSVNEVLSTIFHFEQPEER) are excised as a propeptide. 3 disulfide bridges follow: cysteine 48–cysteine 63, cysteine 55–cysteine 69, and cysteine 62–cysteine 76. Phenylalanine 80 carries the post-translational modification Phenylalanine amide.

The protein belongs to the neurotoxin 10 (Hwtx-1) family. 52 (MTx4) subfamily. In terms of tissue distribution, expressed by the venom gland.

Its subcellular location is the secreted. Functionally, this cationic hydrophobic peptide acts on a lot of different channels and has an antimicrobial activity. It blocks mechanosensitive ion channels (also named stretch-activated channels or SACs), without having effect on whole-cell voltage-sensitive currents. It also affects acetylcholine receptors (nAChRs) through interactions with membrane lipids by prolonging the closing time without affecting channel conductance or opening activity. It shows high affinity for lipid bilayers. It acts by partitioning into the membrane and perturbing the interface between the channel and the lipid bilayer without necessarily being in physical contact with the channel. It inhibits atrial fibrillation as well as the membrane motor of outer hair cells at low doses. It also binds to the voltage sensor of voltage-gated potassium channels from the archaebacterium Aeropyrum pernix (KvAP) without affecting channel gating. It also shows a low inhibition on a large spectra of sodium channels (Nav1.1/SCN1A, Nav1.2/SCN2A, Nav1.3/SCN3A, Nav1.4/SCN4A, Nav1.5/SCN5A, Nav1.6/SCN8A, Nav1.7/SCN9A) (IC(50)=7.4-14 uM), and potassium channels Kv11.1/KCNH2 and Kv11.2/KCNH6 (IC(50)=11 uM for both). It exhibits antimicrobial activities against the Gram-positive bacteria B.subtilis (MIC=0.5 uM), S.aureus (MIC=2-4 uM), and S.epidermidis (MIC=4-8 uM), and Gram-negative bacteria S.typhimurium (MIC=32.64 uM), P.aeruginosa (MIC=8-16 uM), and E.coli (MIC=8-16 uM). The polypeptide is M-theraphotoxin-Gr1a (Grammostola rosea (Chilean rose tarantula)).